A 211-amino-acid polypeptide reads, in one-letter code: Imidazole glycerol phosphate synthase subunit HisH (211 aa).

One can recognise a Glutamine amidotransferase type-1 domain in the interval 1 to 211; the sequence is MIGIIDYGMG…ASIIEGKGSM (211 aa). The active-site Nucleophile is Cys-79. Catalysis depends on residues His-186 and Glu-188.

As to quaternary structure, heterodimer of HisH and HisF.

The protein localises to the cytoplasm. It carries out the reaction 5-[(5-phospho-1-deoxy-D-ribulos-1-ylimino)methylamino]-1-(5-phospho-beta-D-ribosyl)imidazole-4-carboxamide + L-glutamine = D-erythro-1-(imidazol-4-yl)glycerol 3-phosphate + 5-amino-1-(5-phospho-beta-D-ribosyl)imidazole-4-carboxamide + L-glutamate + H(+). It catalyses the reaction L-glutamine + H2O = L-glutamate + NH4(+). The protein operates within amino-acid biosynthesis; L-histidine biosynthesis; L-histidine from 5-phospho-alpha-D-ribose 1-diphosphate: step 5/9. Its function is as follows. IGPS catalyzes the conversion of PRFAR and glutamine to IGP, AICAR and glutamate. The HisH subunit catalyzes the hydrolysis of glutamine to glutamate and ammonia as part of the synthesis of IGP and AICAR. The resulting ammonia molecule is channeled to the active site of HisF. This chain is Imidazole glycerol phosphate synthase subunit HisH, found in Geobacillus sp. (strain WCH70).